Here is a 505-residue protein sequence, read N- to C-terminus: ATP synthase subunit alpha, chloroplastic (505 aa).

170-177 (GDRQTGKT) contacts ATP.

Belongs to the ATPase alpha/beta chains family. In terms of assembly, F-type ATPases have 2 components, CF(1) - the catalytic core - and CF(0) - the membrane proton channel. CF(1) has five subunits: alpha(3), beta(3), gamma(1), delta(1), epsilon(1). CF(0) has four main subunits: a, b, b' and c.

It is found in the plastid. It localises to the chloroplast thylakoid membrane. The catalysed reaction is ATP + H2O + 4 H(+)(in) = ADP + phosphate + 5 H(+)(out). In terms of biological role, produces ATP from ADP in the presence of a proton gradient across the membrane. The alpha chain is a regulatory subunit. The protein is ATP synthase subunit alpha, chloroplastic of Oenothera biennis (German evening primrose).